The primary structure comprises 356 residues: Glutamine synthetase root isozyme 3 (356 aa).

One can recognise a GS beta-grasp domain in the interval 19–99; the sequence is IIAEYIWIGG…VMCDCYTPAG (81 aa). The 251-residue stretch at 106–356 folds into the GS catalytic domain; it reads KRYNAAKIFS…IAETTIIWKP (251 aa).

This sequence belongs to the glutamine synthetase family. In terms of assembly, homooctamer. In terms of tissue distribution, found in all the tissues examined with higher expression found in tissues of the root.

The protein resides in the cytoplasm. It carries out the reaction L-glutamate + NH4(+) + ATP = L-glutamine + ADP + phosphate + H(+). Functionally, plays a role in the flow of nitrogen into nitrogenous organic compounds. The chain is Glutamine synthetase root isozyme 3 (GLN4) from Zea mays (Maize).